Here is a 94-residue protein sequence, read N- to C-terminus: Probable FAD-linked sulfhydryl oxidase FPV093 (94 aa).

Residues 1-94 (MDPRYWGSSF…IDIKKVKKLI (94 aa)) enclose the ERV/ALR sulfhydryl oxidase domain. Residues C41 and C44 are joined by a disulfide bond.

It belongs to the poxviruses E10 family. It depends on FAD as a cofactor.

It catalyses the reaction 2 R'C(R)SH + O2 = R'C(R)S-S(R)CR' + H2O2. Functionally, FAD-dependent sulfhydryl oxidase that catalyzes disulfide bond formation. The polypeptide is Probable FAD-linked sulfhydryl oxidase FPV093 (Fowlpox virus (strain NVSL) (FPV)).